A 353-amino-acid chain; its full sequence is Ferredoxin--NADP reductase (353 aa).

FAD is bound by residues threonine 25, glutamate 44, glutamine 52, tyrosine 57, valine 97, phenylalanine 132, aspartate 298, and serine 339.

Belongs to the ferredoxin--NADP reductase type 2 family. Homodimer. Requires FAD as cofactor.

It carries out the reaction 2 reduced [2Fe-2S]-[ferredoxin] + NADP(+) + H(+) = 2 oxidized [2Fe-2S]-[ferredoxin] + NADPH. The chain is Ferredoxin--NADP reductase from Chlorobium phaeovibrioides (strain DSM 265 / 1930) (Prosthecochloris vibrioformis (strain DSM 265)).